A 430-amino-acid chain; its full sequence is Aspartate aminotransferase, mitochondrial (430 aa).

Residues 1-29 constitute a mitochondrion transit peptide; the sequence is MALLHSSRILSGMAAAFHPGLAAAASARA. Phosphothreonine is present on Thr48. Lys59 is subject to N6-acetyllysine. Gly65 provides a ligand contact to substrate. Position 73 is an N6-acetyllysine; alternate (Lys73). Lys73 is subject to N6-succinyllysine; alternate. N6-acetyllysine is present on Lys82. At Lys90 the chain carries N6-acetyllysine; alternate. N6-succinyllysine; alternate is present on Lys90. Position 96 is a 3'-nitrotyrosine; alternate (Tyr96). Phosphotyrosine; alternate is present on Tyr96. 2 positions are modified to N6-acetyllysine; alternate: Lys107 and Lys122. N6-succinyllysine; alternate is present on residues Lys107 and Lys122. Phosphoserine is present on Ser143. Position 159 is an N6-acetyllysine; alternate (Lys159). Lys159 is subject to N6-succinyllysine; alternate. Trp162 lines the substrate pocket. Lys185 is subject to N6-acetyllysine; alternate. N6-succinyllysine; alternate is present on Lys185. Residue Asn215 participates in substrate binding. Lys227 is subject to N6-succinyllysine. At Lys234 the chain carries N6-acetyllysine. N6-acetyllysine; alternate occurs at positions 279 and 296. Lys279 carries the post-translational modification N6-(pyridoxal phosphate)lysine; alternate. Lys296 is subject to N6-succinyllysine; alternate. The residue at position 302 (Lys302) is an N6-acetyllysine. At Lys309 the chain carries N6-acetyllysine; alternate. Lys309 bears the N6-succinyllysine; alternate mark. At Arg313 the chain carries Asymmetric dimethylarginine. N6-acetyllysine; alternate is present on Lys338. The residue at position 338 (Lys338) is an N6-succinyllysine; alternate. N6-acetyllysine is present on Lys345. An N6-acetyllysine; alternate modification is found at Lys363. The residue at position 363 (Lys363) is an N6-succinyllysine; alternate. N6-acetyllysine occurs at positions 364 and 387. Residues Lys396 and Lys404 each carry the N6-acetyllysine; alternate modification. An N6-succinyllysine; alternate mark is found at Lys396 and Lys404. Residue Arg407 coordinates substrate.

It belongs to the class-I pyridoxal-phosphate-dependent aminotransferase family. As to quaternary structure, homodimer. The cofactor is pyridoxal 5'-phosphate. In terms of processing, acetylation of Lys-296, Lys-345 and Lys-363 is observed in liver mitochondria from fasted mice but not from fed mice. In terms of tissue distribution, detected in brain (at protein level).

It localises to the mitochondrion matrix. Its subcellular location is the cell membrane. The catalysed reaction is L-aspartate + 2-oxoglutarate = oxaloacetate + L-glutamate. It carries out the reaction L-kynurenine + 2-oxoglutarate = kynurenate + L-glutamate + H2O. Catalyzes the irreversible transamination of the L-tryptophan metabolite L-kynurenine to form kynurenic acid (KA). As a member of the malate-aspartate shuttle, it has a key role in the intracellular NAD(H) redox balance. Is important for metabolite exchange between mitochondria and cytosol, and for amino acid metabolism. Facilitates cellular uptake of long-chain free fatty acids. The polypeptide is Aspartate aminotransferase, mitochondrial (Got2) (Mus musculus (Mouse)).